The primary structure comprises 348 residues: tRNA N6-adenosine threonylcarbamoyltransferase (348 aa).

The Fe cation site is built by H115 and H119. Substrate is bound by residues 138–142 (LVSGG), D171, G184, and N276. D304 contacts Fe cation.

It belongs to the KAE1 / TsaD family. The cofactor is Fe(2+).

Its subcellular location is the cytoplasm. The enzyme catalyses L-threonylcarbamoyladenylate + adenosine(37) in tRNA = N(6)-L-threonylcarbamoyladenosine(37) in tRNA + AMP + H(+). In terms of biological role, required for the formation of a threonylcarbamoyl group on adenosine at position 37 (t(6)A37) in tRNAs that read codons beginning with adenine. Is involved in the transfer of the threonylcarbamoyl moiety of threonylcarbamoyl-AMP (TC-AMP) to the N6 group of A37, together with TsaE and TsaB. TsaD likely plays a direct catalytic role in this reaction. The protein is tRNA N6-adenosine threonylcarbamoyltransferase of Xylella fastidiosa (strain 9a5c).